The chain runs to 323 residues: L-lactate dehydrogenase (323 aa).

Residues V18, D39, Y69, and 83-84 (GA) each bind NAD(+). Positions 86 and 92 each coordinate substrate. Residues S105, 122–124 (VAN), and S147 each bind NAD(+). 124–127 (NPVD) is a substrate binding site. 152-155 (DTGR) provides a ligand contact to substrate. The active-site Proton acceptor is the H179. Position 223 is a phosphotyrosine (Y223). T232 contributes to the substrate binding site.

It belongs to the LDH/MDH superfamily. LDH family. Homotetramer.

The protein resides in the cytoplasm. The enzyme catalyses (S)-lactate + NAD(+) = pyruvate + NADH + H(+). The protein operates within fermentation; pyruvate fermentation to lactate; (S)-lactate from pyruvate: step 1/1. Its activity is regulated as follows. Under neutral conditions, the reaction is stimulated 4-fold by fructose 1,6-bisphosphate (FBP), however the L-lactate dehydrogenase is a nonallosteric enzyme. Calcium and zinc ions at 1 mM stimulate the activity almost 2-fold. Weakly inhibited by cadmium, cobalt and copper ions. Catalyzes the conversion of lactate to pyruvate. The polypeptide is L-lactate dehydrogenase (Lactobacillus helveticus (Lactobacillus suntoryeus)).